Consider the following 453-residue polypeptide: Serine incorporator 1 (453 aa).

Glycine 2 carries N-myristoyl glycine lipidation. At 2-39 (GSVLGLCSMASWIPCLCGSAPCLLCRCCPSGNNSTVTR) the chain is on the cytoplasmic side. A helical membrane pass occupies residues 40–60 (LIYALFLLVGVCVACVMLIPG). Topologically, residues 61–88 (MEEQLNKIPGFCENEKGVVPCNILVGYK) are lumenal. A helical transmembrane segment spans residues 89–109 (AVYRLCFGLAMFYLLLSLLMI). The Cytoplasmic segment spans residues 110–123 (KVKSSSDPRAAVHN). Residues 124–144 (GFWFFKFAAAIAIIIGAFFIP) traverse the membrane as a helical segment. The Lumenal segment spans residues 145-151 (EGTFTTV). The chain crosses the membrane as a helical span at residues 152–172 (WFYVGMAGAFCFILIQLVLLI). Residues 173-197 (DFAHSWNESWVEKMEEGNSRCWYAA) are Cytoplasmic-facing. A helical transmembrane segment spans residues 198-218 (LLSATALNYLLSLVAIVLFFV). Over 219 to 231 (YYTHPASCSENKA) the chain is Lumenal. A helical membrane pass occupies residues 232–252 (FISVNMLLCIGASVMSILPKI). The Cytoplasmic portion of the chain corresponds to 253–259 (QESQPRS). Residues 260–280 (GLLQSSVITVYTMYLTWSAMT) form a helical membrane-spanning segment. Topologically, residues 281 to 309 (NEPETNCNPSLLSIIGYNTTSTVPKEGQS) are lumenal. Residues 310–330 (VQWWHAQGIIGLILFLLCVFY) traverse the membrane as a helical segment. Residues 331–387 (SSIRTSNNSQVNKLTLTSDESTLIEDGGARSDGSLEDGDDVHRAVDNERDGVTYSYS) are Cytoplasmic-facing. Serine 351 is modified (phosphoserine). Threonine 352 carries the post-translational modification Phosphothreonine. Phosphoserine is present on residues serine 361 and serine 364. Residues 388–408 (FFHFMLFLASLYIMMTLTNWY) form a helical membrane-spanning segment. The Lumenal portion of the chain corresponds to 409–426 (RYEPSREMKSQWTAVWVK). Residues 427 to 447 (ISSSWIGIVLYVWTLVAPLVL) form a helical membrane-spanning segment. Residues 448-453 (TNRDFD) lie on the Cytoplasmic side of the membrane.

The protein belongs to the TDE1 family. In terms of assembly, interacts with SPTLC1.

The protein localises to the endoplasmic reticulum membrane. In terms of biological role, enhances the incorporation of serine into phosphatidylserine and sphingolipids. In Pongo abelii (Sumatran orangutan), this protein is Serine incorporator 1 (SERINC1).